The following is a 359-amino-acid chain: C-X-C chemokine receptor type 4 (359 aa).

The tract at residues 1–23 (MEPISVSIYTSDNYSEEVGSGDY) is important for chemokine binding and signaling. Residues 1-40 (MEPISVSIYTSDNYSEEVGSGDYDSNKEPCFRDENVHFNR) are Extracellular-facing. A Sulfotyrosine modification is found at Tyr9. N-linked (GlcNAc...) asparagine glycosylation is present at Asn13. Sulfotyrosine is present on Tyr14. Ser20 carries O-linked (Xyl...) (chondroitin sulfate) serine glycosylation. Residue Tyr23 is modified to Sulfotyrosine. 2 cysteine pairs are disulfide-bonded: Cys30–Cys281 and Cys111–Cys193. A helical transmembrane segment spans residues 41 to 65 (IFLPTIYFIIFLTGIVGNGLVILVM). At 66–79 (GYQKKLRSMTDKYR) the chain is on the cytoplasmic side. A helical transmembrane segment spans residues 80–101 (LHLSVADLLFVITLPFWAVDAM). The segment at 96–99 (WAVD) is chemokine binding. Topologically, residues 102 to 112 (ADWYFGKFLCK) are extracellular. Residues 113–132 (AVHIIYTVNLYSSVLILAFI) form a helical membrane-spanning segment. Residues 115–119 (HIIYT) are chemokine binding. Topologically, residues 133 to 156 (SLDRYLAIVHATNSQRPRKLLAEK) are cytoplasmic. An Important for signaling motif is present at residues 135–137 (DRY). The involved in dimerization; when bound to chemokine stretch occupies residues 137-149 (YLAIVHATNSQRP). Residues 157 to 176 (AVYVGVWIPALLLTIPDFIF) form a helical membrane-spanning segment. Over 177-202 (ADVSQGDISQGDDRYICDRLYPDSLW) the chain is Extracellular. Residues 193–197 (CDRLY) are chemokine binding, important for signaling. The segment at 198 to 217 (PDSLWMVVFQFQHIMVGLIL) is involved in dimerization. Residues 203–223 (MVVFQFQHIMVGLILPGIVIL) form a helical membrane-spanning segment. Topologically, residues 224–248 (SCYCIIISKLSHSKGHQKRKALKTT) are cytoplasmic. The chain crosses the membrane as a helical span at residues 249 to 268 (VILILAFFACWLPYYVGISI). Residues 269–289 (DSFILLGVIKQGCDFESIVHK) lie on the Extracellular side of the membrane. The segment at 273–275 (LLG) is involved in dimerization. The chain crosses the membrane as a helical span at residues 290-309 (WISITEALAFFHCCLNPILY). The Cytoplasmic portion of the chain corresponds to 310-359 (AFLGAKFKSSAQHALNSMSRGSSLKILSKGKRGGHSSVSTESESSSFHSS). Residues Ser326 and Ser328 each carry the phosphoserine modification. 2 positions are modified to phosphoserine; by PKC and GRK6: Ser331 and Ser332. Residues 335–359 (ILSKGKRGGHSSVSTESESSSFHSS) are disordered. Ser337 is subject to Phosphoserine; by GRK6. A Glycyl lysine isopeptide (Lys-Gly) (interchain with G-Cter in ubiquitin) cross-link involves residue Lys338. The span at 344 to 359 (HSSVSTESESSSFHSS) shows a compositional bias: low complexity. Ser346 carries the phosphoserine; by GRK6 modification. A phosphoserine mark is found at Ser355 and Ser358.

The protein belongs to the G-protein coupled receptor 1 family. In terms of assembly, monomer. Can form homodimers. Interacts with CD164. Interacts with ARRB2; the interaction is dependent on the C-terminal phosphorylation of CXCR4 and allows activation of MAPK1 and MAPK3. Interacts with ARR3; the interaction is dependent on the C-terminal phosphorylation of CXCR4 and modulates calcium mobilization. Interacts with RNF113A; the interaction, enhanced by CXCL12, promotes CXCR4 ubiquitination and subsequent degradation. Interacts (via the cytoplasmic C-terminal) with ITCH (via the WW domains I and II); the interaction, enhanced by CXCL12, promotes CXCR4 ubiquitination and leads to its degradation. Interacts with extracellular ubiquitin. Interacts with DBN1; this interaction is enhanced by antigenic stimulation. Following LPS binding, may form a complex with GDF5, HSP90AA1 and HSPA8. Post-translationally, phosphorylated on agonist stimulation. Rapidly phosphorylated on serine and threonine residues in the C-terminal. Phosphorylation at Ser-331 and Ser-332 leads to recruitment of ITCH, ubiquitination and protein degradation. Ubiquitinated after ligand binding, leading to its degradation. Ubiquitinated by ITCH at the cell membrane on agonist stimulation. The ubiquitin-dependent mechanism, endosomal sorting complex required for transport (ESCRT), then targets CXCR4 for lysosomal degradation. This process is dependent also on prior Ser-/Thr-phosphorylation in the C-terminal of CXCR4. Also binding of ARRB1 to STAM negatively regulates CXCR4 sorting to lysosomes though modulating ubiquitination of SFR5S. In terms of processing, sulfation is required for efficient binding of CXCL12/SDF-1alpha and promotes its dimerization. Post-translationally, O- and N-glycosylated. N-glycosylation can mask coreceptor function. The O-glycosylation chondroitin sulfate attachment does not affect interaction with CXCL12/SDF-1alpha nor its coreceptor activity. As to expression, lymphocytes, macrophages, neutrophils, microglial cells and astrocytes. Found in spleen, thymus, bone marrow, lymph nodes and, at lower levels in brain, small intestine, stomach and kidney. CXCR4-A is predominant in all tissues tested. During embryonic development, high levels are detected in the endothelium of developing blood vessels and in many regions of the developing brain including the olfactory epithelium, olfactory bulb, hippocampus, cerebellum and spinal cord.

The protein resides in the cell membrane. Its subcellular location is the cell junction. It is found in the early endosome. The protein localises to the late endosome. It localises to the lysosome. Its function is as follows. Receptor for the C-X-C chemokine CXCL12/SDF-1 that transduces a signal by increasing intracellular calcium ion levels and enhancing MAPK1/MAPK3 activation. Involved in the AKT signaling cascade. Plays a role in regulation of cell migration, e.g. during wound healing. Acts as a receptor for extracellular ubiquitin; leading to enhanced intracellular calcium ions and reduced cellular cAMP levels. Binds bacterial lipopolysaccharide (LPS) et mediates LPS-induced inflammatory response, including TNF secretion by monocytes. Involved in hematopoiesis and in cardiac ventricular septum formation. Also plays an essential role in vascularization of the gastrointestinal tract, probably by regulating vascular branching and/or remodeling processes in endothelial cells. Involved in cerebellar development. In the CNS, could mediate hippocampal-neuron survival. The chain is C-X-C chemokine receptor type 4 (Cxcr4) from Mus musculus (Mouse).